We begin with the raw amino-acid sequence, 508 residues long: Photosystem II CP47 reaction center protein (508 aa).

The next 6 helical transmembrane spans lie at 21 to 36 (SVHI…WAGS), 101 to 115 (IVFS…IWHW), 140 to 156 (GIHL…FGAF), 203 to 218 (IAAG…FHLS), 237 to 252 (VLSS…AFVV), and 457 to 472 (SFAL…HGSR).

Belongs to the PsbB/PsbC family. PsbB subfamily. As to quaternary structure, PSII is composed of 1 copy each of membrane proteins PsbA, PsbB, PsbC, PsbD, PsbE, PsbF, PsbH, PsbI, PsbJ, PsbK, PsbL, PsbM, PsbT, PsbX, PsbY, PsbZ, Psb30/Ycf12, at least 3 peripheral proteins of the oxygen-evolving complex and a large number of cofactors. It forms dimeric complexes. Binds multiple chlorophylls. PSII binds additional chlorophylls, carotenoids and specific lipids. serves as cofactor.

The protein localises to the plastid. Its subcellular location is the chloroplast thylakoid membrane. One of the components of the core complex of photosystem II (PSII). It binds chlorophyll and helps catalyze the primary light-induced photochemical processes of PSII. PSII is a light-driven water:plastoquinone oxidoreductase, using light energy to abstract electrons from H(2)O, generating O(2) and a proton gradient subsequently used for ATP formation. The chain is Photosystem II CP47 reaction center protein from Draba nemorosa (Woodland whitlowgrass).